We begin with the raw amino-acid sequence, 370 residues long: Dual-specificity RNA methyltransferase RlmN (370 aa).

E97 serves as the catalytic Proton acceptor. A Radical SAM core domain is found at 103–340; the sequence is EKSRGTLCIS…CTVRRTRGDD (238 aa). A disulfide bridge links C110 with C345. [4Fe-4S] cluster-binding residues include C117, C121, and C124. Residues 170-171, S202, 224-226, and N302 contribute to the S-adenosyl-L-methionine site; these read GE and SLH. C345 serves as the catalytic S-methylcysteine intermediate.

It belongs to the radical SAM superfamily. RlmN family. Requires [4Fe-4S] cluster as cofactor.

The protein localises to the cytoplasm. It carries out the reaction adenosine(2503) in 23S rRNA + 2 reduced [2Fe-2S]-[ferredoxin] + 2 S-adenosyl-L-methionine = 2-methyladenosine(2503) in 23S rRNA + 5'-deoxyadenosine + L-methionine + 2 oxidized [2Fe-2S]-[ferredoxin] + S-adenosyl-L-homocysteine. The enzyme catalyses adenosine(37) in tRNA + 2 reduced [2Fe-2S]-[ferredoxin] + 2 S-adenosyl-L-methionine = 2-methyladenosine(37) in tRNA + 5'-deoxyadenosine + L-methionine + 2 oxidized [2Fe-2S]-[ferredoxin] + S-adenosyl-L-homocysteine. Its function is as follows. Specifically methylates position 2 of adenine 2503 in 23S rRNA and position 2 of adenine 37 in tRNAs. m2A2503 modification seems to play a crucial role in the proofreading step occurring at the peptidyl transferase center and thus would serve to optimize ribosomal fidelity. This is Dual-specificity RNA methyltransferase RlmN from Hydrogenovibrio crunogenus (strain DSM 25203 / XCL-2) (Thiomicrospira crunogena).